The sequence spans 20 residues: Agglutinin beta-1 chain (20 aa).

Polar residues predominate over residues 1-11; sequence NEQSGKSQTVI. The tract at residues 1 to 20 is disordered; the sequence is NEQSGKSQTVIVGSWGAKVS.

Belongs to the jacalin lectin family. As to quaternary structure, tetramer of four alpha chains associated with two or four beta chains.

Functionally, D-galactose-specific lectin, binds the T-antigen structure Gal-beta1,3-GalNAc (Thomsen-Friedenreich-antigen-specific lectin). Potent and selective stimulant of distinct T- and B-cell functions. Shows a unique ability to specifically recognize IgA-1 from human serum. This is Agglutinin beta-1 chain from Artocarpus integer (Jack fruit).